The following is a 613-amino-acid chain: ADP-ribosylation factor-binding protein GGA2 (613 aa).

A VHS domain is found at 33–163; sequence ATDPSMSEQD…MLKKQGIIKQ (131 aa). A GAT domain is found at 188–315; that stretch reads DEEKSKLLTR…GVLLYKQVME (128 aa). A unstructured hinge region spans residues 316–483; the sequence is GRVTFGNRVT…VFVPLESVKP (168 aa). Disordered regions lie at residues 389-414 and 435-466; these read GQNCCEEKRNPSSSTLPGGGVQNPSA and SQKSVPKEVPPGTKSSPGWSWEAGPLAPSPSS. Positions 399–414 are enriched in polar residues; that stretch reads PSSSTLPGGGVQNPSA. Position 400 is a phosphoserine (Ser-400). The region spanning 484–605 is the GAE domain; it reads SSLPPLIVYD…SEVGEVKDFP (122 aa).

Belongs to the GGA protein family. In terms of assembly, monomer. Interacts with NECAP1, TSG101, UBC and AFTPH/aftiphilin. Interacts with CNST. Interacts with GGA1 and GGA3. Binds to clathrin and activated ARFs, such as ARF1, ARF5 and ARF6. Binds RABEP1 and RABGEF1. Interacts with the type-I membrane proteins LRP3, M6PR/CD-MPR, IGF2R/CI-MPR and BACE1. Interacts (via N-terminal VHS domain) with SORL1/sorLA and SORT1 (via C-terminal cytosolic domain). Binds the accessory proteins CCDC91, P200, SYNRG, EPN4 and NECAP2. Interacts with ADRA2B. Interacts (via VHS domain) with PIK4B; the interaction is important for PIK4B location at the Golgi apparatus membrane. In terms of processing, ubiquitinated. In terms of tissue distribution, ubiquitously expressed.

Its subcellular location is the golgi apparatus. The protein localises to the trans-Golgi network membrane. The protein resides in the endosome membrane. It is found in the early endosome membrane. Plays a role in protein sorting and trafficking between the trans-Golgi network (TGN) and endosomes. Mediates the ARF-dependent recruitment of clathrin to the TGN and binds ubiquitinated proteins and membrane cargo molecules with a cytosolic acidic cluster-dileucine (DXXLL) motif. Mediates export of the GPCR receptor ADRA2B to the cell surface. Regulates retrograde transport of phosphorylated form of BACE1 from endosomes to the trans-Golgi network. The protein is ADP-ribosylation factor-binding protein GGA2 (GGA2) of Homo sapiens (Human).